A 207-amino-acid polypeptide reads, in one-letter code: Venom allergen 5 (207 aa).

3 disulfide bridges follow: Cys-4–Cys-16, Cys-8–Cys-105, and Cys-29–Cys-97. The SCP domain occupies 49 to 192; that stretch reads DEHNRFRQKV…MKSHYLVCNY (144 aa). Tyr-111 carries the phosphotyrosine modification. Lys-141 carries an N-linked (Glc) (glycation) lysine glycan. Cys-173 and Cys-190 are joined by a disulfide.

Belongs to the CRISP family. Venom allergen 5-like subfamily. Glycosylated. As to expression, expressed by the venom gland.

It is found in the secreted. The polypeptide is Venom allergen 5 (Polybia paulista (Neotropical social wasp)).